The primary structure comprises 265 residues: Hydroxyethylthiazole kinase (265 aa).

Substrate is bound at residue M50. ATP-binding residues include R125 and T171. Residue G198 coordinates substrate.

The protein belongs to the Thz kinase family. Mg(2+) is required as a cofactor.

The catalysed reaction is 5-(2-hydroxyethyl)-4-methylthiazole + ATP = 4-methyl-5-(2-phosphooxyethyl)-thiazole + ADP + H(+). Its pathway is cofactor biosynthesis; thiamine diphosphate biosynthesis; 4-methyl-5-(2-phosphoethyl)-thiazole from 5-(2-hydroxyethyl)-4-methylthiazole: step 1/1. Its function is as follows. Catalyzes the phosphorylation of the hydroxyl group of 4-methyl-5-beta-hydroxyethylthiazole (THZ). The polypeptide is Hydroxyethylthiazole kinase (Salmonella paratyphi A (strain ATCC 9150 / SARB42)).